The following is a 903-amino-acid chain: Protein translocase subunit SecA (903 aa).

Residues Gln-87, 105 to 109, and Asp-494 each bind ATP; that span reads GEGKT. The disordered stretch occupies residues 861–883; the sequence is SGSQGAAPRQPVRAEGKKVGRND. The segment covering 872–881 has biased composition (basic and acidic residues); that stretch reads VRAEGKKVGR. Residues Cys-885, Cys-887, Cys-896, and Cys-897 each coordinate Zn(2+).

The protein belongs to the SecA family. Monomer and homodimer. Part of the essential Sec protein translocation apparatus which comprises SecA, SecYEG and auxiliary proteins SecDF. Other proteins may also be involved. The cofactor is Zn(2+).

Its subcellular location is the cell membrane. It localises to the cytoplasm. It carries out the reaction ATP + H2O + cellular proteinSide 1 = ADP + phosphate + cellular proteinSide 2.. Its function is as follows. Part of the Sec protein translocase complex. Interacts with the SecYEG preprotein conducting channel. Has a central role in coupling the hydrolysis of ATP to the transfer of proteins into and across the cell membrane, serving as an ATP-driven molecular motor driving the stepwise translocation of polypeptide chains across the membrane. The protein is Protein translocase subunit SecA of Symbiobacterium thermophilum (strain DSM 24528 / JCM 14929 / IAM 14863 / T).